A 765-amino-acid polypeptide reads, in one-letter code: Probable dipeptidyl peptidase 4 (765 aa).

The signal sequence occupies residues 1 to 14 (MKWSILLLVGCAAA). Asn35, Asn78, Asn101, Asn110, Asn169, Asn218, Asn465, and Asn490 each carry an N-linked (GlcNAc...) asparagine glycan. The Charge relay system role is filled by Ser613. N-linked (GlcNAc...) asparagine glycosylation is present at Asn665. Residues Asp690 and His725 each act as charge relay system in the active site.

It belongs to the peptidase S9B family.

The protein localises to the secreted. It catalyses the reaction Release of an N-terminal dipeptide, Xaa-Yaa-|-Zaa-, from a polypeptide, preferentially when Yaa is Pro, provided Zaa is neither Pro nor hydroxyproline.. In terms of biological role, extracellular dipeptidyl-peptidase which removes N-terminal dipeptides sequentially from polypeptides having unsubstituted N-termini provided that the penultimate residue is proline. Contributes to pathogenicity. This Aspergillus fumigatus (strain ATCC MYA-4609 / CBS 101355 / FGSC A1100 / Af293) (Neosartorya fumigata) protein is Probable dipeptidyl peptidase 4 (dpp4).